Reading from the N-terminus, the 695-residue chain is Lupanine 17-hydroxylase [cytochrome c] (695 aa).

An N-terminal signal peptide occupies residues 1–26 (MSANKNIWIIRLGVAFVCVAIGAAQA). Residues 598 to 677 (AMAESGRHIF…ALQAFILQKA (80 aa)) enclose the Cytochrome c domain. Heme c-binding residues include cysteine 612, cysteine 615, and histidine 616.

The protein belongs to the bacterial PQQ dehydrogenase family. Monomer. Requires pyrroloquinoline quinone as cofactor. The cofactor is heme c.

The protein resides in the periplasm. The enzyme catalyses lupanine + 2 Fe(III)-[cytochrome c] + H2O = 17-hydroxylupanine + 2 Fe(II)-[cytochrome c] + 2 H(+). Functionally, catalyzes the first reaction in the catabolism of the alkaloid lupanine. It dehydrogenates lupanine, which can then be hydrated to produce 17-hydroxylupanine. This is Lupanine 17-hydroxylase [cytochrome c] (luh) from Pseudomonas sp.